The chain runs to 309 residues: 11-beta-hydroxysteroid dehydrogenase-like 3 (309 aa).

A helical; Signal-anchor for type II membrane protein membrane pass occupies residues L10 to I30. NADP(+) contacts are provided by residues G54 to R80 and D105. S184 provides a ligand contact to substrate. Y197 functions as the Proton acceptor in the catalytic mechanism. Residues Y197–K201 and K201 contribute to the NADP(+) site.

Belongs to the short-chain dehydrogenases/reductases (SDR) family.

It localises to the membrane. The sequence is that of 11-beta-hydroxysteroid dehydrogenase-like 3 (HSD3) from Arabidopsis thaliana (Mouse-ear cress).